Consider the following 301-residue polypeptide: Acetyl-coenzyme A carboxylase carboxyl transferase subunit beta (301 aa).

A CoA carboxyltransferase N-terminal domain is found at 25–294; that stretch reads LWIKDPSTGE…NSDAPAPQKP (270 aa).

It belongs to the AccD/PCCB family. As to quaternary structure, acetyl-CoA carboxylase is a heterohexamer composed of biotin carboxyl carrier protein (AccB), biotin carboxylase (AccC) and two subunits each of ACCase subunit alpha (AccA) and ACCase subunit beta (AccD).

The protein localises to the cytoplasm. It catalyses the reaction N(6)-carboxybiotinyl-L-lysyl-[protein] + acetyl-CoA = N(6)-biotinyl-L-lysyl-[protein] + malonyl-CoA. It participates in lipid metabolism; malonyl-CoA biosynthesis; malonyl-CoA from acetyl-CoA: step 1/1. Functionally, component of the acetyl coenzyme A carboxylase (ACC) complex. Biotin carboxylase (BC) catalyzes the carboxylation of biotin on its carrier protein (BCCP) and then the CO(2) group is transferred by the transcarboxylase to acetyl-CoA to form malonyl-CoA. This Brucella abortus (strain 2308) protein is Acetyl-coenzyme A carboxylase carboxyl transferase subunit beta.